The following is a 517-amino-acid chain: General transcription factor IIF subunit 1 (517 aa).

Ala2 bears the N-acetylalanine mark. Phosphothreonine is present on Thr156. Residues 178–466 (QQRRLKDQDQ…DAVRRYLTRK (289 aa)) form a disordered region. Phosphoserine occurs at positions 217, 218, 221, and 224. Basic residues predominate over residues 232-251 (PKAKKKAPLAKGGRKKKKKK). Composition is skewed to acidic residues over residues 255–270 (DEAFEDSDDGDFEGQE) and 303–325 (EQSDSSEESEEEKPPEEDKEEEE). Thr331 is subject to Phosphothreonine. Acidic residues predominate over residues 343 to 355 (EESDSSEESDIDS). Residues 364–374 (AKKKTPPKRER) are compositionally biased toward basic residues. Residues Ser377, Ser380, Ser381, and Ser385 each carry the phosphoserine modification. The span at 377–391 (SGGSSRGNSRPGTPS) shows a compositional bias: low complexity. Thr389 carries the post-translational modification Phosphothreonine. Phosphoserine is present on Ser391. At Lys407 the chain carries N6-acetyllysine. Polar residues predominate over residues 428–452 (GPQSLSGKSTPQPPSGKTTPNSGDV). 3 positions are modified to phosphoserine: Ser431, Ser433, and Ser436. 2 positions are modified to phosphothreonine: Thr437 and Thr446. Residue Ser449 is modified to Phosphoserine. Zn(2+) is bound by residues Glu503, His512, and Glu517.

This sequence belongs to the TFIIF alpha subunit family. As to quaternary structure, heterodimer of an alpha and a beta subunit. Interacts with GTF2F2, CTDP1, TAF6/TAFII80 and URI1. Interacts with GTF2B (via C-terminus and preferentially via acetylated form); this interaction prevents binding of GTF2B to GTF2F2. Part of TBP-based Pol II pre-initiation complex (PIC), in which Pol II core assembles with general transcription factors and other specific initiation factors including GTF2E1, GTF2E2, GTF2F1, GTF2F2, TCEA1, ERCC2, ERCC3, GTF2H2, GTF2H3, GTF2H4, GTF2H5, GTF2A1, GTF2A2, GTF2B and TBP; this large multi-subunit PIC complex mediates DNA unwinding and targets Pol II core to the transcription start site where the first phosphodiester bond forms. In terms of processing, phosphorylated on Ser and other residues by TAF1 and casein kinase II-like kinases.

Its subcellular location is the nucleus. Its function is as follows. TFIIF is a general transcription initiation factor that binds to RNA polymerase II and helps to recruit it to the initiation complex in collaboration with TFIIB. It promotes transcription elongation. This is General transcription factor IIF subunit 1 (GTF2F1) from Homo sapiens (Human).